The following is a 1036-amino-acid chain: Isoleucine--tRNA ligase (1036 aa).

A 'HIGH' region motif is present at residues 46–56 (PFATGLPHYGH). The 'KMSKS' region signature appears at 589 to 593 (KMSKR). Lys-592 lines the ATP pocket.

This sequence belongs to the class-I aminoacyl-tRNA synthetase family. IleS type 2 subfamily. In terms of assembly, monomer. It depends on Zn(2+) as a cofactor.

The protein localises to the cytoplasm. It catalyses the reaction tRNA(Ile) + L-isoleucine + ATP = L-isoleucyl-tRNA(Ile) + AMP + diphosphate. Catalyzes the attachment of isoleucine to tRNA(Ile). As IleRS can inadvertently accommodate and process structurally similar amino acids such as valine, to avoid such errors it has two additional distinct tRNA(Ile)-dependent editing activities. One activity is designated as 'pretransfer' editing and involves the hydrolysis of activated Val-AMP. The other activity is designated 'posttransfer' editing and involves deacylation of mischarged Val-tRNA(Ile). In Chlamydia trachomatis serovar A (strain ATCC VR-571B / DSM 19440 / HAR-13), this protein is Isoleucine--tRNA ligase.